The following is a 216-amino-acid chain: MSITATQVNELRKATGAGLMDCKKALTETGGDHEQAVDYLRKKGLAAASKKAGRAATEGLVGSYIHAGGKIGVLVEVNCETDFVAKNEGFQNFVKDVAMHIAAASPLYVRREEVDPSVLEREKEIYRAKAKESGKPDNIVEKIIEGQVNKFYGDICLLEQAFVKDPDKTVQTYLNETIATIGENISIRRFAKFNLGEGLEKKESDFAAEVAAAAGA.

The segment at 81–84 (TDFV) is involved in Mg(2+) ion dislocation from EF-Tu.

This sequence belongs to the EF-Ts family.

The protein resides in the cytoplasm. Associates with the EF-Tu.GDP complex and induces the exchange of GDP to GTP. It remains bound to the aminoacyl-tRNA.EF-Tu.GTP complex up to the GTP hydrolysis stage on the ribosome. The chain is Elongation factor Ts from Geotalea daltonii (strain DSM 22248 / JCM 15807 / FRC-32) (Geobacter daltonii).